Reading from the N-terminus, the 923-residue chain is Alanine--tRNA ligase (923 aa).

Zn(2+) contacts are provided by histidine 614, histidine 618, cysteine 717, and histidine 721. The disordered stretch occupies residues 884–903; the sequence is KVGGGGGGPPDFAQGGGPDA. Over residues 885 to 901 the composition is skewed to gly residues; the sequence is VGGGGGGPPDFAQGGGP.

It belongs to the class-II aminoacyl-tRNA synthetase family. Requires Zn(2+) as cofactor.

It localises to the cytoplasm. The enzyme catalyses tRNA(Ala) + L-alanine + ATP = L-alanyl-tRNA(Ala) + AMP + diphosphate. Functionally, catalyzes the attachment of alanine to tRNA(Ala) in a two-step reaction: alanine is first activated by ATP to form Ala-AMP and then transferred to the acceptor end of tRNA(Ala). Also edits incorrectly charged Ser-tRNA(Ala) and Gly-tRNA(Ala) via its editing domain. The chain is Alanine--tRNA ligase from Haloquadratum walsbyi (strain DSM 16790 / HBSQ001).